The primary structure comprises 1260 residues: Agglutinin-like protein 1 (1260 aa).

An N-terminal signal peptide occupies residues 1–17 (MLQQFTLLFLYLSIASA). 4 cysteine pairs are disulfide-bonded: Cys73-Cys150, Cys96-Cys112, Cys205-Cys298, and Cys227-Cys256. ALS repeat units follow at residues 365 to 396 (TTIT…VDVP), 401 to 432 (TTVT…VQVP), and 438 to 469 (VSTT…IREP). Asn471 carries an N-linked (GlcNAc...) asparagine glycan. An ALS 4 repeat occupies 474 to 505 (VTTTEYWSQSFATTTTVTAPPGETDTVIIREP). Asn507 carries an N-linked (GlcNAc...) asparagine glycan. Residues 510-541 (VTTTEYWSQSYATTTTVTAPPGGTDTVLIREP) form an ALS 5 repeat. Residue Asn543 is glycosylated (N-linked (GlcNAc...) asparagine). One copy of the ALS 6 repeat lies at 546 to 577 (VTTTEYWSQSYATTTTVTAPPGGTDTVIIREP). The N-linked (GlcNAc...) asparagine glycan is linked to Asn579. Residues 582–613 (VTTTEYWSQSYATTTTITAPPGETDTVIIREP) form an ALS 7 repeat. The N-linked (GlcNAc...) asparagine glycan is linked to Asn615. Residues 618 to 649 (VTTTEYWSQSYATTTTVTAPPGGTDTVLIREP) form an ALS 8 repeat. Asn651 is a glycosylation site (N-linked (GlcNAc...) asparagine). The stretch at 654 to 685 (VTTTEYWSQSYATTTTVTAPPGGTDTVLIREP) is one ALS 9 repeat. Asn687 carries an N-linked (GlcNAc...) asparagine glycan. The stretch at 690-721 (VTTTEYWSQSYATTTTVTAPPGGTDTVIIREP) is one ALS 10 repeat. N-linked (GlcNAc...) asparagine glycosylation is present at Asn723. Residues 726–757 (VTTTEYWSQSYATTTTVTAPPGGTDTVIIREP) form an ALS 11 repeat. N-linked (GlcNAc...) asparagine glycosylation is present at Asn759. The stretch at 762–791 (VTTTEYWSQSFATTTTVTAPPGGTDTVIIY) is one ALS 12 repeat. Residues Asn820, Asn886, Asn918, and Asn973 are each glycosylated (N-linked (GlcNAc...) asparagine). 2 stretches are compositionally biased toward polar residues: residues 896 to 918 (PTAS…SSDN) and 964 to 979 (KVTF…GTHD). 2 disordered regions span residues 896 to 924 (PTAS…KSGV) and 954 to 1226 (SIPS…SSSP). Residues 980 to 995 (SQSTSTEIEIVTTSST) show a composition bias toward low complexity. Residues 1002–1062 (VSSNTDLTSE…PTVATSTLAS (61 aa)) are compositionally biased toward polar residues. N-linked (GlcNAc...) asparagine glycans are attached at residues Asn1045 and Asn1068. Positions 1073-1090 (HESASTSLKPSMGENSGL) are enriched in polar residues. The segment covering 1091–1110 (TTSTEIEATTTSPTEAPSPA) has biased composition (low complexity). A compositionally biased stretch (polar residues) spans 1111–1154 (VSSGTDVTTEPTDTREQPTTLSTTSKTNSESVATTQATNENGGK). Composition is skewed to low complexity over residues 1155 to 1176 (SPST…SANS) and 1197 to 1226 (SHST…SSSP). A lipid anchor (GPI-anchor amidated glycine) is attached at Gly1238. The propeptide at 1239-1260 (SGSIIQHSTWLYGLITLLSLFI) is removed in mature form.

Belongs to the ALS family. The GPI-anchor is attached to the protein in the endoplasmic reticulum and serves to target the protein to the cell surface. There, the glucosamine-inositol phospholipid moiety is cleaved off and the GPI-modified mannoprotein is covalently attached via its lipidless GPI glycan remnant to the 1,6-beta-glucan of the outer cell wall layer.

The protein localises to the cell membrane. It is found in the secreted. It localises to the cell wall. In terms of biological role, major cell surface adhesion protein which mediates both yeast-to-host tissue adherence and yeast aggregation. Acts as a downstream effector of the EFG1 regulatory pathway. Required for rapamycin-induced aggregation of C.albicans. Binds glycans and mediates adherence to endothelial and epithelial cells, thereby playing an important role in the pathogenesis of C.albicans infections. In Candida albicans (strain SC5314 / ATCC MYA-2876) (Yeast), this protein is Agglutinin-like protein 1 (ALS1).